We begin with the raw amino-acid sequence, 381 residues long: Transaldolase 1 (381 aa).

Catalysis depends on Lys-149, which acts as the Schiff-base intermediate with substrate.

It belongs to the transaldolase family. Type 2 subfamily.

The protein resides in the cytoplasm. It catalyses the reaction D-sedoheptulose 7-phosphate + D-glyceraldehyde 3-phosphate = D-erythrose 4-phosphate + beta-D-fructose 6-phosphate. Its pathway is carbohydrate degradation; pentose phosphate pathway; D-glyceraldehyde 3-phosphate and beta-D-fructose 6-phosphate from D-ribose 5-phosphate and D-xylulose 5-phosphate (non-oxidative stage): step 2/3. Functionally, transaldolase is important for the balance of metabolites in the pentose-phosphate pathway. The chain is Transaldolase 1 (tal1) from Streptomyces coelicolor (strain ATCC BAA-471 / A3(2) / M145).